Here is a 665-residue protein sequence, read N- to C-terminus: Intraflagellar transport protein 70B (665 aa).

TPR repeat units lie at residues 11-44 (DGEFTAVVYRLIRNARYAEAVQLLGGELQRSPRS), 45-78 (RAGLSLLGYCYYRLQEFALAAECYEQLGQLHPEL), 154-187 (TDGQINLGCLLYKEGQYEAACSKFFAALQASGYQ), 189-221 (DLSYNLALAYYSSRQYASALKHIAEIIERGIRQ), 393-424 (LTIQVQEARHNRDDEAIKKAVNEYDETMEKYI), 425-457 (PVLMAQAKIYWNLENYPMVEKIFRKSVEFCNDH), and 459-492 (VWKLNVAHVLFMQENKYKEAIGFYEPIVKKHYDN). The disordered stretch occupies residues 130–154 (PGSRSLVEQLPSREGGEESGGENET). The stretch at 508–535 (YIMTSQNEEAEELMRKIEKEEEQLSYDD) forms a coiled coil. The stretch at 544 to 577 (CIVNLVIGTLYCAKGNYDFGISRVIKSLEPYNKK) is one TPR 8 repeat.

The protein belongs to the TTC30/dfy-1/fleer family. Interacts with the IFT B complex components IFT27, IFT46, IFT74, IFT52, IFT57, IFT80, IFT81 and IFT88. Interacts with KIF17.

Its subcellular location is the cell projection. It localises to the cilium. Required for polyglutamylation of axonemal tubulin. Plays a role in anterograde intraflagellar transport (IFT), the process by which cilia precursors are transported from the base of the cilium to the site of their incorporation at the tip. In Homo sapiens (Human), this protein is Intraflagellar transport protein 70B.